A 356-amino-acid polypeptide reads, in one-letter code: Guanine nucleotide-binding protein alpha-17 subunit (356 aa).

Gly-2 carries the N-myristoyl glycine lipid modification. Cys-4 is lipidated: S-palmitoyl cysteine. The region spanning 32-356 (SIVKLLLLGA…QKNLQKAGMM (325 aa)) is the G-alpha domain. The interval 35 to 48 (KLLLLGAGECGKST) is G1 motif. GTP is bound by residues 40–47 (GAGECGKS), 177–183 (LYSRVAT), 202–206 (DVGGQ), 271–274 (NKKD), and Ala-328. Residues Ser-47 and Thr-183 each coordinate Mg(2+). A G2 motif region spans residues 175–183 (DILYSRVAT). Positions 198-207 (FRVFDVGGQR) are G3 motif. The segment at 267 to 274 (ILFMNKKD) is G4 motif. The interval 326 to 331 (TCATDT) is G5 motif.

Belongs to the G-alpha family. G proteins are composed of 3 units; alpha, beta and gamma. The alpha chain contains the guanine nucleotide binding site. Expressed in sensory neurons in the head and tail. Expressed in amphid AWC neurons, to a lesser extent in AWB and weakly in AWA, ASH and ADF neurons (head sensory neurons). Expressed in phasmid PHA and PHB neurons (tail sensory neurons).

Its subcellular location is the cell projection. The protein localises to the cilium. It is found in the dendrite. Functionally, guanine nucleotide-binding proteins (G proteins) are involved as modulators or transducers in various transmembrane signaling systems. This specific G-alpha subunit plays an important role in olfaction and in cilia morphogenesis. Involved in chemotactic responses to attractants diacetyl, pyrazine, 2,4,5-trimethylthiazole, benzaldehyde, isoamyl alcohol, butanone and 2,3-pentanedione. Displays a redundant function with gpa-3 in chemotactic responses. Plays a role in the avoidance response to the noxious chemical quinine in ASH sensory neurons. Involved in avoidance responses to copper, sodium dodecyl sulfate and linoleic acid. Involved in osmotic avoidance and mechanosensory responses. Involved in specifying fan-like morphology of cilia of head sensory neurons AWC. Plays a role in the detection of preferred food sources by mediating the recognition of food odors in olfactory sensory neurons. This chain is Guanine nucleotide-binding protein alpha-17 subunit, found in Caenorhabditis elegans.